Reading from the N-terminus, the 266-residue chain is Type III pantothenate kinase (266 aa).

9 to 16 provides a ligand contact to ATP; the sequence is DAGNSRIK. Substrate contacts are provided by residues Y96 and 103–106; that span reads GSDR. D105 (proton acceptor) is an active-site residue. T129 is a binding site for ATP. T189 serves as a coordination point for substrate.

This sequence belongs to the type III pantothenate kinase family. Homodimer. NH4(+) serves as cofactor. Requires K(+) as cofactor.

The protein localises to the cytoplasm. It catalyses the reaction (R)-pantothenate + ATP = (R)-4'-phosphopantothenate + ADP + H(+). It functions in the pathway cofactor biosynthesis; coenzyme A biosynthesis; CoA from (R)-pantothenate: step 1/5. Catalyzes the phosphorylation of pantothenate (Pan), the first step in CoA biosynthesis. The sequence is that of Type III pantothenate kinase from Burkholderia cenocepacia (strain ATCC BAA-245 / DSM 16553 / LMG 16656 / NCTC 13227 / J2315 / CF5610) (Burkholderia cepacia (strain J2315)).